The chain runs to 142 residues: Regulatory protein RecX (142 aa).

The protein belongs to the RecX family.

The protein resides in the cytoplasm. Modulates RecA activity. The sequence is that of Regulatory protein RecX from Thermus thermophilus (strain ATCC BAA-163 / DSM 7039 / HB27).